The following is a 494-amino-acid chain: Alpha-amylase 1 (494 aa).

A signal peptide spans 1–18 (MFLAKSIVCLALLAVANA). C46 and C102 are joined by a disulfide. Ca(2+) is bound by residues N116, R165, and D174. C153 and C167 are oxidised to a cystine. R202 lines the chloride pocket. The active-site Nucleophile is the D204. H208 lines the Ca(2+) pocket. The active-site Proton donor is E241. Residues N304 and R343 each coordinate chloride. A disordered region spans residues 350 to 370 (FTDTDQGPPTTDGQNIASPSF). Low complexity predominate over residues 351 to 363 (TDTDQGPPTTDGQ). Cystine bridges form between C376/C382 and C448/C460.

The protein belongs to the glycosyl hydrolase 13 family. Monomer. Ca(2+) is required as a cofactor. The cofactor is chloride.

The enzyme catalyses Endohydrolysis of (1-&gt;4)-alpha-D-glucosidic linkages in polysaccharides containing three or more (1-&gt;4)-alpha-linked D-glucose units.. The chain is Alpha-amylase 1 (Amy35) from Drosophila ananassae (Fruit fly).